We begin with the raw amino-acid sequence, 387 residues long: Large ribosomal subunit protein uL3 (387 aa).

This sequence belongs to the universal ribosomal protein uL3 family.

Its subcellular location is the cytoplasm. This Candida glabrata (strain ATCC 2001 / BCRC 20586 / JCM 3761 / NBRC 0622 / NRRL Y-65 / CBS 138) (Yeast) protein is Large ribosomal subunit protein uL3 (RPL3).